The primary structure comprises 166 residues: 2-C-methyl-D-erythritol 2,4-cyclodiphosphate synthase (166 aa).

A divalent metal cation contacts are provided by D12 and H14. 4-CDP-2-C-methyl-D-erythritol 2-phosphate-binding positions include 12–14 and 38–39; these read DVH and HS. Residue H46 coordinates a divalent metal cation. 4-CDP-2-C-methyl-D-erythritol 2-phosphate-binding positions include 60–62, 136–139, F143, and R146; these read DIG and TTSE.

Belongs to the IspF family. As to quaternary structure, homotrimer. The cofactor is a divalent metal cation.

It carries out the reaction 4-CDP-2-C-methyl-D-erythritol 2-phosphate = 2-C-methyl-D-erythritol 2,4-cyclic diphosphate + CMP. The protein operates within isoprenoid biosynthesis; isopentenyl diphosphate biosynthesis via DXP pathway; isopentenyl diphosphate from 1-deoxy-D-xylulose 5-phosphate: step 4/6. In terms of biological role, involved in the biosynthesis of isopentenyl diphosphate (IPP) and dimethylallyl diphosphate (DMAPP), two major building blocks of isoprenoid compounds. Catalyzes the conversion of 4-diphosphocytidyl-2-C-methyl-D-erythritol 2-phosphate (CDP-ME2P) to 2-C-methyl-D-erythritol 2,4-cyclodiphosphate (ME-CPP) with a corresponding release of cytidine 5-monophosphate (CMP). In Xanthomonas axonopodis pv. citri (strain 306), this protein is 2-C-methyl-D-erythritol 2,4-cyclodiphosphate synthase.